Consider the following 338-residue polypeptide: Protein SGT1 homolog (338 aa).

Ala-2 bears the N-acetylalanine mark. 3 TPR repeats span residues 11–45 (AASRLFRSFSDALIEQDPQAALEELTKALEQKPDD), 46–79 (APYYCQRAYCHILLGNYSDAVADAKKSLELNPNS), and 80–113 (STALLRKGICEYHEKNYAAALETFTEGQKLNSAD). The CS domain maps to 142–231 (QSKIKYDWYQ…PEAVRWEKLE (90 aa)). The SGS domain maps to 249–338 (LYPSSSHYTR…PPDDMEWKKY (90 aa)). The residue at position 254 (Ser-254) is a Phosphoserine. At Thr-257 the chain carries Phosphothreonine. A Glycyl lysine isopeptide (Lys-Gly) (interchain with G-Cter in SUMO1); alternate cross-link involves residue Lys-268. Lys-268 is covalently cross-linked (Glycyl lysine isopeptide (Lys-Gly) (interchain with G-Cter in SUMO2); alternate). Ser-304 bears the Phosphoserine mark.

The protein belongs to the SGT1 family. Probably associates with SCF (SKP1-CUL1-F-box protein) complex through interaction with SKP1. Interacts with S100A6. Interacts with HSP90. Phosphorylated at Ser-254 and Ser-304, dephosphorylation promotes nuclear translocation, most likely due to disruption of the SUGT1-HSP90 complex.

The protein resides in the cytoplasm. The protein localises to the nucleus. Its function is as follows. May play a role in ubiquitination and subsequent proteasomal degradation of target proteins. In Bos taurus (Bovine), this protein is Protein SGT1 homolog.